Consider the following 426-residue polypeptide: Serine hydroxymethyltransferase (426 aa).

(6S)-5,6,7,8-tetrahydrofolate-binding positions include Leu118 and 122–124; that span reads GHL. Lys227 is subject to N6-(pyridoxal phosphate)lysine.

Belongs to the SHMT family. In terms of assembly, homodimer. Requires pyridoxal 5'-phosphate as cofactor.

It is found in the cytoplasm. It carries out the reaction (6R)-5,10-methylene-5,6,7,8-tetrahydrofolate + glycine + H2O = (6S)-5,6,7,8-tetrahydrofolate + L-serine. It functions in the pathway one-carbon metabolism; tetrahydrofolate interconversion. It participates in amino-acid biosynthesis; glycine biosynthesis; glycine from L-serine: step 1/1. In terms of biological role, catalyzes the reversible interconversion of serine and glycine with tetrahydrofolate (THF) serving as the one-carbon carrier. This reaction serves as the major source of one-carbon groups required for the biosynthesis of purines, thymidylate, methionine, and other important biomolecules. Also exhibits THF-independent aldolase activity toward beta-hydroxyamino acids, producing glycine and aldehydes, via a retro-aldol mechanism. The sequence is that of Serine hydroxymethyltransferase from Mycobacterium avium (strain 104).